Here is a 227-residue protein sequence, read N- to C-terminus: Deoxyribose-phosphate aldolase (227 aa).

Asp84 (proton donor/acceptor) is an active-site residue. The Schiff-base intermediate with acetaldehyde role is filled by Lys146. The active-site Proton donor/acceptor is the Lys188.

Belongs to the DeoC/FbaB aldolase family. DeoC type 1 subfamily.

The protein resides in the cytoplasm. The catalysed reaction is 2-deoxy-D-ribose 5-phosphate = D-glyceraldehyde 3-phosphate + acetaldehyde. Its pathway is carbohydrate degradation; 2-deoxy-D-ribose 1-phosphate degradation; D-glyceraldehyde 3-phosphate and acetaldehyde from 2-deoxy-alpha-D-ribose 1-phosphate: step 2/2. Functionally, catalyzes a reversible aldol reaction between acetaldehyde and D-glyceraldehyde 3-phosphate to generate 2-deoxy-D-ribose 5-phosphate. This is Deoxyribose-phosphate aldolase from Pyrobaculum islandicum (strain DSM 4184 / JCM 9189 / GEO3).